Consider the following 239-residue polypeptide: Ribonuclease PH (239 aa).

Phosphate-binding positions include Arg86 and Gly124 to Arg126.

Belongs to the RNase PH family. As to quaternary structure, homohexameric ring arranged as a trimer of dimers.

It carries out the reaction tRNA(n+1) + phosphate = tRNA(n) + a ribonucleoside 5'-diphosphate. In terms of biological role, phosphorolytic 3'-5' exoribonuclease that plays an important role in tRNA 3'-end maturation. Removes nucleotide residues following the 3'-CCA terminus of tRNAs; can also add nucleotides to the ends of RNA molecules by using nucleoside diphosphates as substrates, but this may not be physiologically important. Probably plays a role in initiation of 16S rRNA degradation (leading to ribosome degradation) during starvation. This is Ribonuclease PH from Rickettsia bellii (strain RML369-C).